A 257-amino-acid chain; its full sequence is NAD-capped RNA hydrolase NudC (257 aa).

Arg69 is a substrate binding site. 2 residues coordinate Zn(2+): Cys98 and Cys101. Glu111 lines the substrate pocket. Residues Cys116 and Cys119 each contribute to the Zn(2+) site. Position 124 (Tyr124) interacts with substrate. The Nudix hydrolase domain occupies 125 to 248 (PQIAPCIIVA…TVARRLIEDT (124 aa)). Positions 158, 174, and 178 each coordinate a divalent metal cation. The short motif at 159-180 (GFVEVGETLEQAVAREVMEESG) is the Nudix box element. 192–199 (QPWPFPQS) is a binding site for substrate. Residue Glu219 coordinates a divalent metal cation. Substrate is bound at residue Ala241.

This sequence belongs to the Nudix hydrolase family. NudC subfamily. In terms of assembly, homodimer. Requires Mg(2+) as cofactor. Mn(2+) is required as a cofactor. Zn(2+) serves as cofactor.

The catalysed reaction is a 5'-end NAD(+)-phospho-ribonucleoside in mRNA + H2O = a 5'-end phospho-adenosine-phospho-ribonucleoside in mRNA + beta-nicotinamide D-ribonucleotide + 2 H(+). It carries out the reaction NAD(+) + H2O = beta-nicotinamide D-ribonucleotide + AMP + 2 H(+). The enzyme catalyses NADH + H2O = reduced beta-nicotinamide D-ribonucleotide + AMP + 2 H(+). Its function is as follows. mRNA decapping enzyme that specifically removes the nicotinamide adenine dinucleotide (NAD) cap from a subset of mRNAs by hydrolyzing the diphosphate linkage to produce nicotinamide mononucleotide (NMN) and 5' monophosphate mRNA. The NAD-cap is present at the 5'-end of some mRNAs and stabilizes RNA against 5'-processing. Has preference for mRNAs with a 5'-end purine. Catalyzes the hydrolysis of a broad range of dinucleotide pyrophosphates. This chain is NAD-capped RNA hydrolase NudC, found in Citrobacter koseri (strain ATCC BAA-895 / CDC 4225-83 / SGSC4696).